Reading from the N-terminus, the 313-residue chain is NF-kappa-B inhibitor delta (313 aa).

ANK repeat units lie at residues 48–83 (EGDTLLHLFAARGLRWAAYAAAEVLQVYRRLDIREH), 84–113 (KGKTPLLVAAAANQPLIVEDLLNLGAEPNA), 117–146 (QGRSVLHVAATYGLPGVLLAVLNSGVQVDL), 152–201 (EGLT…NHTS), 206–236 (SNKTVLHLAVQAANPTLVQLLLELPRGDLRT), and 243–276 (HGNTALHMAAALPPGPAQEAIVRHLLAAGADPTL).

It belongs to the NF-kappa-B inhibitor family. Interacts with NFKB1, RELA and RELB; in the nucleus.

It is found in the nucleus. Its function is as follows. Regulates the expression of IL-2, IL-6, and other cytokines through regulation on NF-kappa-B activity. Functions in the regulation of inflammatory responses. Involved in the induction of T helper 17 cells (Th17) differentiation upon recognition of antigen by T cell antigen receptor (TCR). May also regulate TCR-induced negative selection of thymocytes. The chain is NF-kappa-B inhibitor delta (NFKBID) from Homo sapiens (Human).